A 349-amino-acid polypeptide reads, in one-letter code: Twinfilin-2-B (349 aa).

ADF-H domains lie at Gln4–Ser139 and Gly177–His313. The disordered stretch occupies residues Gln321–Ser349.

The protein belongs to the actin-binding proteins ADF family. Twinfilin subfamily. Interacts with G-actin; ADP-actin form and capping protein (CP).

Its subcellular location is the cytoplasm. The protein localises to the cytoskeleton. The protein resides in the perinuclear region. In terms of biological role, actin-binding protein involved in motile and morphological processes. Inhibits actin polymerization, likely by sequestering G-actin. The sequence is that of Twinfilin-2-B (twf2-b) from Xenopus laevis (African clawed frog).